The sequence spans 366 residues: Sec-independent protein translocase protein TatC (366 aa).

7 helical membrane passes run 42–62, 70–90, 97–117, 134–154, 179–199, 207–227, and 230–250; these read VLAV…LFTM, HMPA…FIPL, AVFI…APGL, ILFY…VFGF, LFFA…LVIV, LAGF…ILTP, and VLSQ…GLFV. Over residues 266–279 the composition is skewed to acidic residues; the sequence is EAEESGAADDESDE. Positions 266 to 366 are disordered; sequence EAEESGAADD…PSPKKPDSPV (101 aa). Basic and acidic residues-rich tracts occupy residues 281-290 and 301-318; these read VSARHAEYEA and DMDK…RLES. The span at 319 to 333 shows a compositional bias: polar residues; sequence DSSASDDGPESNTAG.

The protein belongs to the TatC family. In terms of assembly, the Tat system comprises two distinct complexes: a TatABC complex, containing multiple copies of TatA, TatB and TatC subunits, and a separate TatA complex, containing only TatA subunits. Substrates initially bind to the TatABC complex, which probably triggers association of the separate TatA complex to form the active translocon.

The protein resides in the cell inner membrane. Its function is as follows. Part of the twin-arginine translocation (Tat) system that transports large folded proteins containing a characteristic twin-arginine motif in their signal peptide across membranes. Together with TatB, TatC is part of a receptor directly interacting with Tat signal peptides. The polypeptide is Sec-independent protein translocase protein TatC (Halothiobacillus neapolitanus (strain ATCC 23641 / c2) (Thiobacillus neapolitanus)).